We begin with the raw amino-acid sequence, 122 residues long: Immunoglobulin lambda variable 4-3 (122 aa).

The signal sequence occupies residues 1–19 (MAWVSFYLLPFIFSTGLCA). The segment at 20–44 (LPVLTQPPSASALLGASIKLTCTLS) is framework-1. Residues 21–122 (PVLTQPPSAS…ESHTIDGQVG (102 aa)) enclose the Ig-like domain. Cysteines 41 and 111 form a disulfide. Residues 45 to 51 (SEHSTYT) are complementarity-determining-1. The interval 52–68 (IEWYQQRPGRSPQYIMK) is framework-2. The segment at 69–75 (VKSDGSH) is complementarity-determining-2. The segment at 76–111 (SKGDGIPDRFMGSSSGADRYLTFSNLQSDDEAEYHC) is framework-3. The interval 112-122 (GESHTIDGQVG) is complementarity-determining-3.

In terms of assembly, immunoglobulins are composed of two identical heavy chains and two identical light chains; disulfide-linked.

The protein localises to the secreted. The protein resides in the cell membrane. In terms of biological role, v region of the variable domain of immunoglobulin light chains that participates in the antigen recognition. Immunoglobulins, also known as antibodies, are membrane-bound or secreted glycoproteins produced by B lymphocytes. In the recognition phase of humoral immunity, the membrane-bound immunoglobulins serve as receptors which, upon binding of a specific antigen, trigger the clonal expansion and differentiation of B lymphocytes into immunoglobulins-secreting plasma cells. Secreted immunoglobulins mediate the effector phase of humoral immunity, which results in the elimination of bound antigens. The antigen binding site is formed by the variable domain of one heavy chain, together with that of its associated light chain. Thus, each immunoglobulin has two antigen binding sites with remarkable affinity for a particular antigen. The variable domains are assembled by a process called V-(D)-J rearrangement and can then be subjected to somatic hypermutations which, after exposure to antigen and selection, allow affinity maturation for a particular antigen. This is Immunoglobulin lambda variable 4-3 from Homo sapiens (Human).